Here is a 498-residue protein sequence, read N- to C-terminus: Pyruvate kinase (498 aa).

Residue Arg53 coordinates substrate. Residues Asn55, Ser57, Asp87, and Thr88 each coordinate K(+). Residue 55-58 (NFSH) coordinates ATP. ATP contacts are provided by Arg94 and Lys178. Glu240 serves as a coordination point for Mg(2+). 3 residues coordinate substrate: Gly263, Asp264, and Thr296. Asp264 lines the Mg(2+) pocket.

It belongs to the pyruvate kinase family. As to quaternary structure, homotetramer. Mg(2+) is required as a cofactor. The cofactor is K(+).

It carries out the reaction pyruvate + ATP = phosphoenolpyruvate + ADP + H(+). It participates in carbohydrate degradation; glycolysis; pyruvate from D-glyceraldehyde 3-phosphate: step 5/5. In Trypanoplasma borreli, this protein is Pyruvate kinase (PYK).